A 485-amino-acid polypeptide reads, in one-letter code: NADH-quinone oxidoreductase subunit N (485 aa).

14 helical membrane passes run 8–28 (LIAL…MLSI), 35–55 (FLNA…LWFV), 71–91 (GFAM…CTFA), 105–125 (FYLL…ANHL), 127–147 (ALFL…GYAF), 159–179 (YTIL…LVYA), 203–223 (LLAG…LVPF), 235–255 (PAPV…GVVM), 271–291 (VVLG…ALSQ), 297–317 (LLGY…IALQ), 326–346 (VGVY…VVSL), 373–393 (AAVM…LGFI), 408–430 (WWLV…RVAV), and 455–475 (IVVL…QPLI).

Belongs to the complex I subunit 2 family. In terms of assembly, NDH-1 is composed of 13 different subunits. Subunits NuoA, H, J, K, L, M, N constitute the membrane sector of the complex.

Its subcellular location is the cell inner membrane. It carries out the reaction a quinone + NADH + 5 H(+)(in) = a quinol + NAD(+) + 4 H(+)(out). Functionally, NDH-1 shuttles electrons from NADH, via FMN and iron-sulfur (Fe-S) centers, to quinones in the respiratory chain. The immediate electron acceptor for the enzyme in this species is believed to be ubiquinone. Couples the redox reaction to proton translocation (for every two electrons transferred, four hydrogen ions are translocated across the cytoplasmic membrane), and thus conserves the redox energy in a proton gradient. The polypeptide is NADH-quinone oxidoreductase subunit N (Salmonella gallinarum (strain 287/91 / NCTC 13346)).